We begin with the raw amino-acid sequence, 138 residues long: Basic phospholipase A2 homolog promutoxin (138 aa).

The N-terminal stretch at Met-1 to Gly-16 is a signal peptide. Cystine bridges form between Cys-42/Cys-132, Cys-44/Cys-60, Cys-59/Cys-112, Cys-65/Cys-138, Cys-66/Cys-105, Cys-73/Cys-98, and Cys-91/Cys-103. Residues Lys-122–Lys-133 are important for membrane-damaging activities in eukaryotes and bacteria; heparin-binding.

Belongs to the phospholipase A2 family. Group II subfamily. R49 sub-subfamily. In terms of assembly, homodimer; non-covalently linked. Expressed by the venom gland.

It localises to the secreted. Functionally, snake venom phospholipase A2 homolog that lacks enzymatic activity. Exhibits potent myotoxicity causing myonecrosis and edema in the gastrocnemius muscle of mice. Is also able to stimulate the release of IL12 (IL12A-IL12B), TNF-alpha (TNF), IL6 and IL1-beta (IL1B) from human monocytes, and induce IL2, TNFalpha and IL6 release from T-cells. A model of myotoxic mechanism has been proposed: an apo Lys49-PLA2 is activated by the entrance of a hydrophobic molecule (e.g. fatty acid) at the hydrophobic channel of the protein leading to a reorientation of a monomer. This reorientation causes a transition between 'inactive' to 'active' states, causing alignment of C-terminal and membrane-docking sites (MDoS) side-by-side and putting the membrane-disruption sites (MDiS) in the same plane, exposed to solvent and in a symmetric position for both monomers. The MDoS region stabilizes the toxin on membrane by the interaction of charged residues with phospholipid head groups. Subsequently, the MDiS region destabilizes the membrane with penetration of hydrophobic residues. This insertion causes a disorganization of the membrane, allowing an uncontrolled influx of ions (i.e. calcium and sodium), and eventually triggering irreversible intracellular alterations and cell death. The polypeptide is Basic phospholipase A2 homolog promutoxin (Protobothrops mucrosquamatus (Taiwan habu)).